We begin with the raw amino-acid sequence, 94 residues long: Large ribosomal subunit protein bL25 (94 aa).

It belongs to the bacterial ribosomal protein bL25 family. As to quaternary structure, part of the 50S ribosomal subunit; part of the 5S rRNA/L5/L18/L25 subcomplex. Contacts the 5S rRNA. Binds to the 5S rRNA independently of L5 and L18.

This is one of the proteins that binds to the 5S RNA in the ribosome where it forms part of the central protuberance. The polypeptide is Large ribosomal subunit protein bL25 (Enterobacter sp. (strain 638)).